The primary structure comprises 175 residues: Putative adenylate cyclase MJ0240 (175 aa).

The 175-residue stretch at 1–175 (MIEVEIKVKI…RKSYLELRGL (175 aa)) folds into the CYTH domain. Y37 (proton acceptor) is an active-site residue.

It belongs to the adenylyl cyclase CyaB family.

The protein resides in the cytoplasm. It carries out the reaction ATP = 3',5'-cyclic AMP + diphosphate. Could catalyze the biosynthesis of cyclic AMP (cAMP) from ATP. The protein is Putative adenylate cyclase MJ0240 of Methanocaldococcus jannaschii (strain ATCC 43067 / DSM 2661 / JAL-1 / JCM 10045 / NBRC 100440) (Methanococcus jannaschii).